The primary structure comprises 212 residues: Protein irg-1 (212 aa).

Expressed in the intestine.

Its function is as follows. Plays a role in innate immunity by conferring resistance to virulent strains of the Gram-negative bacterium P.aeruginosa via the zip-2 pathway. Can act independently of several immunity-related pathways including pmk-1 p38MAPK, dbl-1 TGF-beta, kgb-1 JNK and bar-1/beta-catenin pathways. The polypeptide is Protein irg-1 (Caenorhabditis elegans).